We begin with the raw amino-acid sequence, 302 residues long: Glycine--tRNA ligase alpha subunit (302 aa).

It belongs to the class-II aminoacyl-tRNA synthetase family. As to quaternary structure, tetramer of two alpha and two beta subunits.

The protein localises to the cytoplasm. It catalyses the reaction tRNA(Gly) + glycine + ATP = glycyl-tRNA(Gly) + AMP + diphosphate. This is Glycine--tRNA ligase alpha subunit from Haemophilus ducreyi (strain 35000HP / ATCC 700724).